The sequence spans 282 residues: uncharacterized protein (282 aa).

Residues tyrosine 22–phenylalanine 42 traverse the membrane as a helical segment.

It is found in the cell membrane. This is an uncharacterized protein from Bacillus anthracis.